The chain runs to 78 residues: DNA-directed RNA polymerase subunit omega (78 aa).

The protein belongs to the RNA polymerase subunit omega family. As to quaternary structure, in cyanobacteria the RNAP catalytic core is composed of 2 alpha, 1 beta, 1 beta', 1 gamma and 1 omega subunit. When a sigma factor is associated with the core the holoenzyme is formed, which can initiate transcription.

It carries out the reaction RNA(n) + a ribonucleoside 5'-triphosphate = RNA(n+1) + diphosphate. Its function is as follows. Promotes RNA polymerase assembly. Latches the N- and C-terminal regions of the beta' subunit thereby facilitating its interaction with the beta and alpha subunits. The polypeptide is DNA-directed RNA polymerase subunit omega (Trichormus variabilis (strain ATCC 29413 / PCC 7937) (Anabaena variabilis)).